The chain runs to 116 residues: Protein TCL1B1 (116 aa).

The protein belongs to the TCL1 family.

The sequence is that of Protein TCL1B1 (Tcl1b1) from Mus musculus (Mouse).